Consider the following 97-residue polypeptide: uncharacterized protein (97 aa).

Residues Thr72–Lys97 are disordered. A compositionally biased stretch (basic and acidic residues) spans Val73–Pro88.

The protein belongs to the chlamydial CPn_0121/CT_031/TC_0300 family.

This is an uncharacterized protein from Chlamydia pneumoniae (Chlamydophila pneumoniae).